Reading from the N-terminus, the 210-residue chain is Probable GTP-binding protein EngB (210 aa).

In terms of domain architecture, EngB-type G spans 25–199 (TGIEVAFAGR…RQKLDTWFNE (175 aa)). GTP-binding positions include 33–40 (GRSNAGKS), 60–64 (GRTQL), 78–81 (DLPG), 145–148 (TKAD), and 178–180 (FSS). Residues serine 40 and threonine 62 each coordinate Mg(2+).

This sequence belongs to the TRAFAC class TrmE-Era-EngA-EngB-Septin-like GTPase superfamily. EngB GTPase family. Mg(2+) serves as cofactor.

Necessary for normal cell division and for the maintenance of normal septation. The chain is Probable GTP-binding protein EngB from Escherichia coli O157:H7.